The primary structure comprises 874 residues: Cyanophycin synthetase (874 aa).

One can recognise an ATP-grasp domain in the interval 224–480 (KTTLAEAGIP…VAAPVIDMLF (257 aa)). An ATP-binding site is contributed by 495 to 501 (GTNGKTT).

The protein in the C-terminal section; belongs to the MurCDEF family. As to quaternary structure, homodimer.

The enzyme catalyses [L-4-(L-arginin-2-N-yl)aspartate](n) + L-aspartate + ATP = [L-4-(L-arginin-2-N-yl)aspartate](n)-L-aspartate + ADP + phosphate + H(+). The catalysed reaction is [L-4-(L-arginin-2-N-yl)aspartate](n)-L-aspartate + L-arginine + ATP = [L-4-(L-arginin-2-N-yl)aspartate](n+1) + ADP + phosphate + H(+). Functionally, catalyzes the ATP-dependent polymerization of arginine and aspartate to multi-L-arginyl-poly-L-aspartic acid (cyanophycin; a water-insoluble reserve polymer). This chain is Cyanophycin synthetase (cphA), found in Geminocystis herdmanii (strain PCC 6308) (Synechocystis sp. (strain PCC 6308)).